Here is a 511-residue protein sequence, read N- to C-terminus: MAQNVNNIKDHVDLFHQPEYQELFENKKQFEGMPTAEKVQEVAEWTKSWEYREKNFAREALTVNPAKACQPLGALLAAIGFEGTLPFVHGSQGCVAYFRTHLTRHFKEPVSAVSSSMTENAAVFGGLKNMVDGLQNSYALYKPKMIAVCTTCMAEVIGDDLGAFLGNARQDGVIPDDLPVPFAHTPSFVGSHITGYDSMMKSILSTLTEGKKKETTNGKINFIAGFETYIGNVRAIKNIISAFDLEGTLLSDTEMYLDSPNLGEFKMYHEGTSLEDAADSINAEATVTLQTYTTPKTREYIEKKWGQKTYTYRPWGVKGTDEFLMGLSELTGKPIPKEFEIARGRAVDAMTDTQAWVHGKRAAVYGDPDLVMGLLQFMLEMGIEPVHVLVNNSTKEFEEEAKALLAASPYGQQATVWGGKDLWHMRSLLFTEPVDFLVGNSYAKYLQRDTKTPLIRIGYPIFDRHHLHRYSTIGYEGAINLLNWIANGLMDELDRKTDTPSVTDISFDLVR.

[8Fe-7S] cluster is bound by residues Cys-69, Cys-94, Cys-152, and Ser-187.

Belongs to the NifD/NifK/NifE/NifN family. In terms of assembly, tetramer of two alpha and two beta chains. Forms complex with the iron protein (nitrogenase component 2). It depends on [8Fe-7S] cluster as a cofactor.

It carries out the reaction N2 + 8 reduced [2Fe-2S]-[ferredoxin] + 16 ATP + 16 H2O = H2 + 8 oxidized [2Fe-2S]-[ferredoxin] + 2 NH4(+) + 16 ADP + 16 phosphate + 6 H(+). Its function is as follows. This molybdenum-iron protein is part of the nitrogenase complex that catalyzes the key enzymatic reactions in nitrogen fixation. In Crocosphaera subtropica (strain ATCC 51142 / BH68) (Cyanothece sp. (strain ATCC 51142)), this protein is Nitrogenase molybdenum-iron protein beta chain (nifK).